We begin with the raw amino-acid sequence, 259 residues long: MLPSTSVNSLVQGNGVLNSRDAARHTAGAKRYKYLRRLFRFRQMDFEFAAWQMLYLFTSPQRVYRNFHYRKQTKDQWARDDPAFLVLLSIWLCVSTIGFGFVLDMGFFETIKLLLWVVLIDCVGVGLLIATLMWFISNKYLVKRQSRDYDVEWGYAFDVHLNAFYPLLVILHFIQLFFINHVILTDTFIGYLVGNTLWLVAVGYYIYVTFLGYSALPFLKNTVILLYPFAPLILLYGLSLALGWNFTHTLCSFYKYRVK.

The residue at position 1 (M1) is an N-acetylmethionine. Residues 1 to 82 (MLPSTSVNSL…TKDQWARDDP (82 aa)) are Cytoplasmic-facing. S6 is modified (phosphoserine). The chain crosses the membrane as a helical span at residues 83–103 (AFLVLLSIWLCVSTIGFGFVL). Topologically, residues 104-115 (DMGFFETIKLLL) are lumenal. Residues 116–136 (WVVLIDCVGVGLLIATLMWFI) form a helical membrane-spanning segment. Residues 137 to 163 (SNKYLVKRQSRDYDVEWGYAFDVHLNA) are Cytoplasmic-facing. The chain crosses the membrane as a helical span at residues 164–184 (FYPLLVILHFIQLFFINHVIL). Residues 185–187 (TDT) lie on the Lumenal side of the membrane. A helical membrane pass occupies residues 188–208 (FIGYLVGNTLWLVAVGYYIYV). The Cytoplasmic portion of the chain corresponds to 209-222 (TFLGYSALPFLKNT). The helical transmembrane segment at 223-243 (VILLYPFAPLILLYGLSLALG) threads the bilayer. Over 244 to 259 (WNFTHTLCSFYKYRVK) the chain is Lumenal.

It belongs to the unc-50 family. Present in periodontal ligament fibroblasts (at protein level).

The protein resides in the nucleus inner membrane. The protein localises to the golgi apparatus membrane. In terms of biological role, involved in the cell surface expression of neuronal nicotinic receptors. Binds RNA. This Homo sapiens (Human) protein is Protein unc-50 homolog (UNC50).